The primary structure comprises 185 residues: Ribosome-recycling factor (185 aa).

The protein belongs to the RRF family.

It is found in the cytoplasm. Its function is as follows. Responsible for the release of ribosomes from messenger RNA at the termination of protein biosynthesis. May increase the efficiency of translation by recycling ribosomes from one round of translation to another. The polypeptide is Ribosome-recycling factor (Xanthomonas oryzae pv. oryzae (strain MAFF 311018)).